The sequence spans 160 residues: S-ribosylhomocysteine lyase (160 aa).

The Fe cation site is built by His-57, His-61, and Cys-127.

It belongs to the LuxS family. In terms of assembly, homodimer. Requires Fe cation as cofactor.

It catalyses the reaction S-(5-deoxy-D-ribos-5-yl)-L-homocysteine = (S)-4,5-dihydroxypentane-2,3-dione + L-homocysteine. Functionally, involved in the synthesis of autoinducer 2 (AI-2) which is secreted by bacteria and is used to communicate both the cell density and the metabolic potential of the environment. The regulation of gene expression in response to changes in cell density is called quorum sensing. Catalyzes the transformation of S-ribosylhomocysteine (RHC) to homocysteine (HC) and 4,5-dihydroxy-2,3-pentadione (DPD). The protein is S-ribosylhomocysteine lyase of Streptococcus pyogenes serotype M4 (strain MGAS10750).